The chain runs to 688 residues: Ethylmalonyl-CoA mutase (688 aa).

The region spanning 530-659 (TPRLVVGKPG…VGLAKVVERA (130 aa)) is the B12-binding domain. Position 543 (His543) interacts with adenosylcob(III)alamin. Positions 666-688 (DRADTEAGVPGAPKRNESGAQVF) are disordered.

The protein belongs to the methylmalonyl-CoA mutase family. Adenosylcob(III)alamin serves as cofactor.

The catalysed reaction is (2R)-ethylmalonyl-CoA = (2S)-methylsuccinyl-CoA. In terms of biological role, radical enzyme that catalyzes the transformation of (2R)-ethylmalonyl-CoA to (2S)-methylsuccinyl-CoA. Is involved in the ethylmalonyl-CoA pathway for acetyl-CoA assimilation required for M.extorquens growth on one- and two-carbon compounds such as ethylamine, methanol or ethanol as sole carbon source. This enzyme acts as a regulatory metabolic control point in this pathway, that allows M.extorquens to efficiently restore metabolic balance when challenged with a sudden change in the growth substrate. The sequence is that of Ethylmalonyl-CoA mutase from Methylorubrum extorquens (strain ATCC 14718 / DSM 1338 / JCM 2805 / NCIMB 9133 / AM1) (Methylobacterium extorquens).